A 187-amino-acid chain; its full sequence is Acetyl-CoA decarbonylase/synthase complex subunit epsilon (187 aa).

Methionine 1 carries the post-translational modification Blocked amino end (Met).

This sequence belongs to the CdhB family. In terms of assembly, heterotetramer of two alpha and two epsilon subunits. The ACDS complex is made up of alpha, epsilon, beta, gamma and delta subunits with a probable stoichiometry of (alpha(2)epsilon(2))(4)-beta(8)-(gamma(1)delta(1))(8).

Its function is as follows. Part of a complex that catalyzes the reversible cleavage of acetyl-CoA, allowing autotrophic growth from CO(2). The alpha-epsilon subcomponent functions as a carbon monoxide dehydrogenase. The precise role of the epsilon subunit is unclear; it may have a stabilizing role within the alpha(2)epsilon(2) component and/or be involved in electron transfer to FAD during a potential FAD-mediated CO oxidation. In Methanothrix soehngenii (Methanosaeta concilii), this protein is Acetyl-CoA decarbonylase/synthase complex subunit epsilon.